A 487-amino-acid chain; its full sequence is NADH-quinone oxidoreductase subunit N (487 aa).

Helical transmembrane passes span 7 to 27 (ILGP…LLMV), 38 to 58 (LVGL…GLGA), 79 to 99 (YAKA…MVWL), 111 to 131 (ILVL…DLIA), 164 to 184 (FVLG…VYGF), 207 to 227 (LLIG…AVPF), 238 to 258 (APTP…LTLF), 276 to 296 (VIIL…IVQT), 301 to 321 (LMAY…AAGT), 328 to 348 (VLVY…VILA), 373 to 393 (AAAM…AGFF), 406 to 426 (GLFA…FYYL), and 451 to 471 (VILI…SVVV).

Belongs to the complex I subunit 2 family. NDH-1 is composed of 14 different subunits. Subunits NuoA, H, J, K, L, M, N constitute the membrane sector of the complex.

The protein resides in the cell inner membrane. It catalyses the reaction a quinone + NADH + 5 H(+)(in) = a quinol + NAD(+) + 4 H(+)(out). Functionally, NDH-1 shuttles electrons from NADH, via FMN and iron-sulfur (Fe-S) centers, to quinones in the respiratory chain. The immediate electron acceptor for the enzyme in this species is believed to be ubiquinone. Couples the redox reaction to proton translocation (for every two electrons transferred, four hydrogen ions are translocated across the cytoplasmic membrane), and thus conserves the redox energy in a proton gradient. This Rhodospirillum rubrum (strain ATCC 11170 / ATH 1.1.1 / DSM 467 / LMG 4362 / NCIMB 8255 / S1) protein is NADH-quinone oxidoreductase subunit N.